The chain runs to 234 residues: Redox-sensing transcriptional repressor Rex (234 aa).

The segment at residues 17-56 (TYIRVLEELEAQNVLRASSGELARRAGVTPFQVRKDLTYF) is a DNA-binding region (H-T-H motif). 91–96 (GMGRLG) lines the NAD(+) pocket.

The protein belongs to the transcriptional regulatory Rex family. Homodimer.

It localises to the cytoplasm. Its function is as follows. Modulates transcription in response to changes in cellular NADH/NAD(+) redox state. In Deinococcus radiodurans (strain ATCC 13939 / DSM 20539 / JCM 16871 / CCUG 27074 / LMG 4051 / NBRC 15346 / NCIMB 9279 / VKM B-1422 / R1), this protein is Redox-sensing transcriptional repressor Rex.